Consider the following 233-residue polypeptide: 5'-methylthioadenosine/S-adenosylhomocysteine nucleosidase (233 aa).

Residue Glu12 is the Proton acceptor of the active site. Substrate is bound by residues Gly78, Ile156, and Met177–Glu178. Asp201 acts as the Proton donor in catalysis.

The protein belongs to the PNP/UDP phosphorylase family. MtnN subfamily.

It carries out the reaction S-adenosyl-L-homocysteine + H2O = S-(5-deoxy-D-ribos-5-yl)-L-homocysteine + adenine. It catalyses the reaction S-methyl-5'-thioadenosine + H2O = 5-(methylsulfanyl)-D-ribose + adenine. The catalysed reaction is 5'-deoxyadenosine + H2O = 5-deoxy-D-ribose + adenine. Its pathway is amino-acid biosynthesis; L-methionine biosynthesis via salvage pathway; S-methyl-5-thio-alpha-D-ribose 1-phosphate from S-methyl-5'-thioadenosine (hydrolase route): step 1/2. Catalyzes the irreversible cleavage of the glycosidic bond in both 5'-methylthioadenosine (MTA) and S-adenosylhomocysteine (SAH/AdoHcy) to adenine and the corresponding thioribose, 5'-methylthioribose and S-ribosylhomocysteine, respectively. Also cleaves 5'-deoxyadenosine, a toxic by-product of radical S-adenosylmethionine (SAM) enzymes, into 5-deoxyribose and adenine. This chain is 5'-methylthioadenosine/S-adenosylhomocysteine nucleosidase, found in Listeria innocua serovar 6a (strain ATCC BAA-680 / CLIP 11262).